We begin with the raw amino-acid sequence, 93 residues long: Phosphoribosyl-ATP pyrophosphatase (93 aa).

The protein belongs to the PRA-PH family.

It is found in the cytoplasm. The catalysed reaction is 1-(5-phospho-beta-D-ribosyl)-ATP + H2O = 1-(5-phospho-beta-D-ribosyl)-5'-AMP + diphosphate + H(+). Its pathway is amino-acid biosynthesis; L-histidine biosynthesis; L-histidine from 5-phospho-alpha-D-ribose 1-diphosphate: step 2/9. The sequence is that of Phosphoribosyl-ATP pyrophosphatase from Corynebacterium aurimucosum (strain ATCC 700975 / DSM 44827 / CIP 107346 / CN-1) (Corynebacterium nigricans).